Here is a 60-residue protein sequence, read N- to C-terminus: Large ribosomal subunit protein bL32 (60 aa).

It belongs to the bacterial ribosomal protein bL32 family.

The polypeptide is Large ribosomal subunit protein bL32 (Streptococcus equi subsp. zooepidemicus (strain MGCS10565)).